A 318-amino-acid polypeptide reads, in one-letter code: Actin-related protein 2/3 complex subunit 2A (318 aa).

Residues 297 to 318 are disordered; that stretch reads RSMNNKSFKRLGLNEVNHTNSK.

It belongs to the ARPC2 family. Component of the Arp2/3 complex composed of ARP2, ARP3, ARPC1/p41-ARC, ARPC2/p34-ARC, ARPC3/p21-ARC, ARPC4/p20-ARC and ARPC5/p16-ARC. Interacts with ARPC4. In terms of tissue distribution, expressed at low levels in all tissues with a relatively highest expression in inflorescences.

The protein localises to the cytoplasm. It localises to the cytoskeleton. Its subcellular location is the cell projection. Its function is as follows. Functions as actin-binding component of the Arp2/3 complex which is involved in regulation of actin polymerization and together with an activating nucleation-promoting factor (NPF) mediates the formation of branched actin networks. Seems to contact the mother actin filament. Arp2/3 complex plays a critical role in the control of cell morphogenesis via the modulation of cell polarity development. The polypeptide is Actin-related protein 2/3 complex subunit 2A (ARPC2A) (Arabidopsis thaliana (Mouse-ear cress)).